The chain runs to 354 residues: uncharacterized protein (354 aa).

This sequence belongs to the asfivirus B354L family.

This is an uncharacterized protein from Ornithodoros (relapsing fever ticks).